A 687-amino-acid chain; its full sequence is Fatty acid oxidation complex subunit alpha (687 aa).

The enoyl-CoA hydratase stretch occupies residues 1-191 (MKNTSAFAWT…KLGVVDASVP (191 aa)). The 3-hydroxyacyl-CoA dehydrogenase stretch occupies residues 307-687 (KSIDYVGVLG…ADKYGDRFIE (381 aa)).

In the N-terminal section; belongs to the enoyl-CoA hydratase/isomerase family. This sequence in the central section; belongs to the 3-hydroxyacyl-CoA dehydrogenase family. As to quaternary structure, heterotetramer of two alpha chains (FadJ) and two beta chains (FadI).

It localises to the cytoplasm. It catalyses the reaction a (3S)-3-hydroxyacyl-CoA = a (2E)-enoyl-CoA + H2O. It carries out the reaction a 4-saturated-(3S)-3-hydroxyacyl-CoA = a (3E)-enoyl-CoA + H2O. The enzyme catalyses a (3S)-3-hydroxyacyl-CoA + NAD(+) = a 3-oxoacyl-CoA + NADH + H(+). The catalysed reaction is (3S)-3-hydroxybutanoyl-CoA = (3R)-3-hydroxybutanoyl-CoA. It participates in lipid metabolism; fatty acid beta-oxidation. In terms of biological role, catalyzes the formation of a hydroxyacyl-CoA by addition of water on enoyl-CoA. Also exhibits 3-hydroxyacyl-CoA epimerase and 3-hydroxyacyl-CoA dehydrogenase activities. This chain is Fatty acid oxidation complex subunit alpha, found in Aliivibrio fischeri (strain ATCC 700601 / ES114) (Vibrio fischeri).